The primary structure comprises 85 residues: Large ribosomal subunit protein bL27 (85 aa).

The segment at 1-21 is disordered; that stretch reads MAHKKGGGTTRNGRDSESKRL.

The protein belongs to the bacterial ribosomal protein bL27 family.

The chain is Large ribosomal subunit protein bL27 from Janthinobacterium sp. (strain Marseille) (Minibacterium massiliensis).